The chain runs to 4518 residues: Dynein axonemal heavy chain 11 (4518 aa).

Positions 1 to 1857 are stem; sequence MAASVAAQEA…LVHICDAQFQ (1857 aa). 4 AAA regions span residues 1858 to 2079, 2139 to 2368, 2474 to 2721, and 2819 to 3068; these read YFYE…VLVV, QMVR…TSFK, TMDP…VFQG, and NYND…EGRH. ATP contacts are provided by residues 1896–1903, 2177–2184, 2512–2519, and 2857–2864; these read GPAGTGKT, GNAGTGKS, GNAGVGKT, and GVGGSGKQ. The interval 3074–3405 is stalk; that stretch reads KSFLEQISLF…GQSIKSFEAQ (332 aa). Residues 3322–3391 adopt a coiled-coil conformation; that stretch reads LAQANLELAT…NRLVKELEVK (70 aa). AAA stretches follow at residues 3461–3688 and 3898–4124; these read LTDD…EIER and LRNF…VLYN.

This sequence belongs to the dynein heavy chain family. In terms of assembly, consists of at least two heavy chains and a number of intermediate and light chains. Interacts with CFAP45.

Its subcellular location is the cytoplasm. The protein resides in the cytoskeleton. It localises to the cilium axoneme. Its function is as follows. Force generating protein of respiratory cilia. Produces force towards the minus ends of microtubules. Dynein has ATPase activity; the force-producing power stroke is thought to occur on release of ADP. The sequence is that of Dynein axonemal heavy chain 11 (DNAH11) from Sus scrofa (Pig).